We begin with the raw amino-acid sequence, 1076 residues long: MLRNGNEGMSTIPGFSQIQFEGFCRFINQALAEELDKFPIIKDPDHEIAFQLFAKGYQLLEPSIKERDAVYESLTYSSELYVSARLIFGFDVQKQTISIGNIPIMNSLGTFIINGIYRIVINQILLSPGIYYRSELDHKGISIYTGTIISDWGGRSELAIDKKERIWARVSRKQKISILVLSSAMGSNLREILDNVSYPEIFLSFPNAKEKKRIESKEKAILEFYQQFACVGGDLVFSESLCEELQKKFFQQKCELGRIGRRNMNRRLNLDIPQNNTFLLPRDVLAATDHLIGMKFGTGILDDDDMNHLKNKRIRSVADLLQDQFGLALGRLQHAVQKTIRRVFIRQSKPTPQTLVTPTSTSILLITTYETFFGTYPLSQVFDQTNPLTQTVHGRKVSCLGPGGLTGRTASFRSRDIHPSHYGRICPIDTSEGINVGLTGSLAIHARIDHLWGSIESPFYEISAEKAKKKKARQVVYLSPNRDEYYMIAAGNSLSLNQGIQEEQVVPARYRQEFLTIAWEQIHVRSIFPFQYFSIGGSLIPFIEHNDANRALMSSNMQRQAVPLSRSEKCIVGTGLERQTALDSRVSVIAEREGKIVSTDSHKILLSSSGKTISIPLVNHRRSNKNTCMHQKPRVPRGKSIKKGQILAEGAATVGGELALGKNVLVAYMPWEGYNFEDAVLISERLVYEDIYTSFHIRKYEIQTDTTSQGSAEKITKEIPHLEEHLLRNLDRNGVVRLGSWVETGDILVGKLTPQIASESSYIAEAGLLRAIFGLEVSTSKETSLKLPIGGRGRVIDVKWIQRDPLDIMVRVYILQKREIKVGDKVAGRHGNKGIISKILPRQDMPYLQDGTPVDMVFNPLGVPSRMNVGQIFESSLGLAGDLLKKHYRIAPFDERYEQEASRKLVFSELYEASKETKNPWVFEPEYPGKSRIFDGRTGDPFEQPVLIGKSYILKLIHQVDEKIHGRSTGPYSLVTQQPVRGRAKQGGQRVGEMEVWALEGFGVAHILQEILTYKSDHLIARQEILNATIWGKRIPNHEDPPESFRVLVRELRSLALELNHFLVSEKNFQINREEV.

The protein belongs to the RNA polymerase beta chain family. In plastids the minimal PEP RNA polymerase catalytic core is composed of four subunits: alpha, beta, beta', and beta''. When a (nuclear-encoded) sigma factor is associated with the core the holoenzyme is formed, which can initiate transcription.

The protein resides in the plastid. The protein localises to the chloroplast. The enzyme catalyses RNA(n) + a ribonucleoside 5'-triphosphate = RNA(n+1) + diphosphate. Its function is as follows. DNA-dependent RNA polymerase catalyzes the transcription of DNA into RNA using the four ribonucleoside triphosphates as substrates. This is DNA-directed RNA polymerase subunit beta from Agrostis stolonifera (Creeping bentgrass).